A 378-amino-acid chain; its full sequence is Non-functional pseudokinase ZRK6 (378 aa).

In terms of domain architecture, Protein kinase spans 34-378; it reads DGKCNPIKNF…SNNRSQMSSI (345 aa). ATP is bound by residues 40 to 48 and Lys-83; that span reads IKNFSYDQI.

This sequence belongs to the protein kinase superfamily. Ser/Thr protein kinase family. ZRK subfamily. As to quaternary structure, interacts with RPP13L4/ZAR1.

This is Non-functional pseudokinase ZRK6 from Arabidopsis thaliana (Mouse-ear cress).